We begin with the raw amino-acid sequence, 141 residues long: ATP synthase F(0) complex subunit C2, mitochondrial (141 aa).

A mitochondrion-targeting transit peptide spans 1-66; sequence MYACSKFVST…RSFQTSAISR (66 aa). Residues 82–102 form a helical membrane-spanning segment; sequence VGVAGSGAGIGTVFGSLIIGY. Position 109 is an N6,N6,N6-trimethyllysine (Lys-109). A helical membrane pass occupies residues 117 to 137; sequence ILGFALSEAMGLFCLMVAFLI.

It belongs to the ATPase C chain family. In terms of assembly, F-type ATPases have 2 components, CF(1) - the catalytic core - and CF(0) - the membrane proton channel. CF(1) has five subunits: alpha(3), beta(3), gamma(1), delta(1), epsilon(1). CF(0) has three main subunits: a, b and c. Interacts with DNAJC30; interaction is direct. Post-translationally, trimethylated by ATPSCKMT at Lys-109. Methylation is required for proper incorporation of the C subunit into the ATP synthase complex and mitochondrial respiration.

It localises to the mitochondrion membrane. Functionally, mitochondrial membrane ATP synthase (F(1)F(0) ATP synthase or Complex V) produces ATP from ADP in the presence of a proton gradient across the membrane which is generated by electron transport complexes of the respiratory chain. F-type ATPases consist of two structural domains, F(1) - containing the extramembraneous catalytic core and F(0) - containing the membrane proton channel, linked together by a central stalk and a peripheral stalk. During catalysis, ATP synthesis in the catalytic domain of F(1) is coupled via a rotary mechanism of the central stalk subunits to proton translocation. Part of the complex F(0) domain. A homomeric c-ring of probably 10 subunits is part of the complex rotary element. The chain is ATP synthase F(0) complex subunit C2, mitochondrial from Rattus norvegicus (Rat).